The primary structure comprises 29 residues: Ranatuerin-2SEa (29 aa).

Cys-23 and Cys-29 are disulfide-bonded.

As to expression, expressed by the skin glands.

It localises to the secreted. Functionally, mast cell degranulating peptide. Causes histamine release from rat peritoneal mast cells in vitro. Has antibacterial activity against the Gram-negative bacterium E.coli K12 and Gram-positive bacterium M.luteus NCT C2665. The polypeptide is Ranatuerin-2SEa (Lithobates sevosus (Dusky gopher frog)).